The chain runs to 149 residues: Natriuretic peptides A (149 aa).

An N-terminal signal peptide occupies residues 1 to 23 (MGSPIAASFLLFLAVQLLGQTGA). 2 propeptides span residues 24–121 (NPVY…AAPR) and 91–101 (DGGALGRSPWD). Positions 49–103 (MPLEDEAESPQALSEQNAEAGAALSPLPEVPPWTGEVSPAQRDGGALGRSPWDSS) are disordered. Phosphoserine is present on Ser-127. Residues Cys-128 and Cys-144 are joined by a disulfide bond. Residues 145–149 (NSFRY) are important for degradation of atrial natriuretic peptide by IDE.

This sequence belongs to the natriuretic peptide family. Homodimer; disulfide-linked antiparallel dimer. Post-translationally, the precursor molecule is proteolytically cleaved by CORIN at Arg-121 to produce the atrial natriuretic peptide. Undergoes further proteolytic cleavage by unknown proteases to give rise to long-acting natriuretic peptide, vessel dilator and kaliuretic peptide. Additional processing gives rise to the auriculin and atriopeptin peptides. In the kidneys, alternative processing by an unknown protease results in the peptide urodilatin. In terms of processing, cleavage by MME initiates degradation of the factor and thereby regulates its activity. Degradation by IDE results in reduced activation of NPR1 (in vitro). During IDE degradation, the resulting products can temporarily stimulate NPR2 to produce cGMP, before the fragments are completely degraded and inactivated by IDE (in vitro). Degraded by IDE. Post-translationally, phosphorylation on Ser-127 decreases vasorelaxant activity.

The protein localises to the secreted. Its subcellular location is the perikaryon. It localises to the cell projection. In terms of biological role, hormone that plays a key role in mediating cardio-renal homeostasis, and is involved in vascular remodeling and regulating energy metabolism. Acts by specifically binding and stimulating NPR1 to produce cGMP, which in turn activates effector proteins, such as PRKG1, that drive various biological responses. Regulates vasodilation, natriuresis, diuresis and aldosterone synthesis and is therefore essential for regulating blood pressure, controlling the extracellular fluid volume and maintaining the fluid-electrolyte balance. Also involved in inhibiting cardiac remodeling and cardiac hypertrophy by inducing cardiomyocyte apoptosis and attenuating the growth of cardiomyocytes and fibroblasts. Plays a role in female pregnancy by promoting trophoblast invasion and spiral artery remodeling in uterus, and thus prevents pregnancy-induced hypertension. In adipose tissue, acts in various cGMP- and PKG-dependent pathways to regulate lipid metabolism and energy homeostasis. This includes up-regulating lipid metabolism and mitochondrial oxygen utilization by activating the AMP-activated protein kinase (AMPK), and increasing energy expenditure by acting via MAPK11 to promote the UCP1-dependent thermogenesis of brown adipose tissue. Binds the clearance receptor NPR3 which removes the hormone from circulation. May have a role in cardio-renal homeostasis through regulation of natriuresis, diuresis, vasodilation, and inhibiting aldosterone synthesis. In vitro, promotes the production of cGMP and induces vasodilation. May promote natriuresis, at least in part, by enhancing prostaglandin E2 synthesis resulting in the inhibition of renal Na+-K+-ATPase. However reports on the involvement of this peptide in mammal blood volume and blood pressure homeostasis are conflicting; according to a report, in vivo it is not sufficient to activate cGMP and does not inhibit collecting duct transport nor effect diuresis and natriuresis. Appears to bind to specific receptors that are distinct from the receptors bound by atrial natriuretic peptide and vessel dilator. Possibly enhances protein excretion in urine by decreasing proximal tubular protein reabsorption. Its function is as follows. May have a role in cardio-renal homeostasis through regulation of natriuresis, diuresis, and vasodilation. In vitro, promotes the production of cGMP and induces vasodilation. May promote natriuresis, at least in part, by enhancing prostaglandin E2 synthesis resulting in the inhibition of renal Na+-K+-ATPase. However reports on the involvement of this peptide in mammal blood volume and blood pressure homeostasis are conflicting; according to a report it is not sufficient to activate cGMP and does not inhibit collecting duct transport nor effect diuresis and natriuresis. Appears to bind to specific receptors that are distinct from the receptors bound by the atrial natriuretic and long-acting natriuretic peptides. Possibly functions in protein excretion in urine by maintaining the integrity of the proximal tubules and enhancing protein excretion by decreasing proximal tubular protein reabsorption. Functionally, may have a role in cardio-renal homeostasis through regulation of diuresis and inhibiting aldosterone synthesis. In vitro, promotes the production of cGMP and induces vasodilation. May promote natriuresis, at least in part, by enhancing prostaglandin E2 synthesis resulting in the inhibition of renal Na+-K+-ATPase. May have a role in potassium excretion but not sodium excretion (natriuresis). Possibly enhances protein excretion in urine by decreasing proximal tubular protein reabsorption. In terms of biological role, hormone produced in the kidneys that appears to be important for maintaining cardio-renal homeostasis. Mediates vasodilation, natriuresis and diuresis primarily in the renal system, in order to maintain the extracellular fluid volume and control the fluid-electrolyte balance. Specifically binds and stimulates cGMP production by renal transmembrane receptors, likely NPR1. Urodilatin not ANP, may be the natriuretic peptide responsible for the regulation of sodium and water homeostasis in the kidney. May have a role in cardio-renal homeostasis through regulation of natriuresis and vasodilation. In vivo promotes natriuresis and in vitro, vasodilates renal artery strips. Its function is as follows. May have a role in cardio-renal homeostasis through regulation of regulation of natriuresis and vasodilation. In vivo promotes natriuresis. In vitro, vasodilates intestinal smooth muscle but not smooth muscle strips. Functionally, may have a role in cardio-renal homeostasis through regulation of natriuresis and vasodilation. In vivo promotes natriuresis. In vitro, selectively vasodilates intestinal and vascular smooth muscle strips. In terms of biological role, may have a role in cardio-renal homeostasis through regulation of natriuresis and vasodilation. In vivo promotes natriuresis. In vitro, selectively vasodilates intestinal smooth muscle but not vascular smooth muscle strips. This chain is Natriuretic peptides A (NPPA), found in Canis lupus familiaris (Dog).